Consider the following 363-residue polypeptide: 3-isopropylmalate dehydrogenase (363 aa).

78-89 (GPKWGTGAVRPE) is a binding site for NAD(+). 4 residues coordinate substrate: arginine 96, arginine 106, arginine 135, and aspartate 224. 3 residues coordinate Mg(2+): aspartate 224, aspartate 249, and aspartate 253. 288–299 (GSAPDLPANKVN) contacts NAD(+).

This sequence belongs to the isocitrate and isopropylmalate dehydrogenases family. Homodimer. Requires Mg(2+) as cofactor. It depends on Mn(2+) as a cofactor.

It localises to the cytoplasm. The catalysed reaction is (2R,3S)-3-isopropylmalate + NAD(+) = 4-methyl-2-oxopentanoate + CO2 + NADH. It participates in amino-acid biosynthesis; L-leucine biosynthesis; L-leucine from 3-methyl-2-oxobutanoate: step 3/4. In terms of biological role, catalyzes the oxidation of 3-carboxy-2-hydroxy-4-methylpentanoate (3-isopropylmalate) to 3-carboxy-4-methyl-2-oxopentanoate. The product decarboxylates to 4-methyl-2 oxopentanoate. This is 3-isopropylmalate dehydrogenase (LEU2) from Cyberlindnera jadinii (Torula yeast).